The sequence spans 325 residues: Gibberellin 20-oxidase-like protein (325 aa).

The Fe2OG dioxygenase domain occupies 152–266 (CHGYFRINNY…RFSLAFFWCF (115 aa)). Positions 186, 188, and 244 each coordinate Fe cation. Arg257 is a binding site for 2-oxoglutarate.

This sequence belongs to the iron/ascorbate-dependent oxidoreductase family. GA20OX subfamily. Fe(2+) serves as cofactor. As to expression, highly expressed in elongation zone of lateral roots.

In terms of biological role, negative regulator of root hair growth. This chain is Gibberellin 20-oxidase-like protein, found in Arabidopsis thaliana (Mouse-ear cress).